Here is a 232-residue protein sequence, read N- to C-terminus: Noggin (232 aa).

Residues 1-27 (MERCPSLGVTLYALVVVLGLRATPAGG) form the signal peptide. Asn-62 is a glycosylation site (N-linked (GlcNAc...) asparagine). The interval 77-96 (GFMATSPPEDRPGGGGGAAG) is disordered. Cystine bridges form between Cys-155/Cys-192, Cys-178/Cys-228, Cys-184/Cys-230, and Cys-207/Cys-215.

This sequence belongs to the noggin family. As to quaternary structure, homodimer. Interacts with GDF5; inhibits chondrocyte differentiation.

It localises to the secreted. Its function is as follows. Inhibitor of bone morphogenetic proteins (BMP) signaling which is required for growth and patterning of the neural tube and somite. Essential for cartilage morphogenesis and joint formation. Inhibits chondrocyte differentiation through its interaction with GDF5 and, probably, GDF6. The sequence is that of Noggin (NOG) from Homo sapiens (Human).